The chain runs to 151 residues: Methylglyoxal synthase (151 aa).

In terms of domain architecture, MGS-like spans 6–151 (RVMPAHKHIA…DYDAYLAERV (146 aa)). Residues His-19, Lys-23, 45-48 (TGTT), and 65-66 (SG) contribute to the substrate site. The active-site Proton donor/acceptor is the Asp-71. Residue His-98 participates in substrate binding.

The protein belongs to the methylglyoxal synthase family.

It catalyses the reaction dihydroxyacetone phosphate = methylglyoxal + phosphate. Its function is as follows. Catalyzes the formation of methylglyoxal from dihydroxyacetone phosphate. In Aliivibrio fischeri (strain ATCC 700601 / ES114) (Vibrio fischeri), this protein is Methylglyoxal synthase.